The chain runs to 730 residues: Phosphoribosylformylglycinamidine synthase subunit PurL (730 aa).

His-44 is a catalytic residue. 2 residues coordinate ATP: Tyr-47 and Lys-86. Glu-88 is a binding site for Mg(2+). Substrate-binding positions include 89-92 (SHNH) and Arg-111. His-90 (proton acceptor) is an active-site residue. Asp-112 lines the Mg(2+) pocket. Gln-235 is a binding site for substrate. Asp-263 lines the Mg(2+) pocket. 307 to 309 (ESQ) contacts substrate. ATP contacts are provided by Asn-489 and Gly-526. Asn-527 is a binding site for Mg(2+). Ser-529 is a substrate binding site.

Belongs to the FGAMS family. In terms of assembly, monomer. Part of the FGAM synthase complex composed of 1 PurL, 1 PurQ and 2 PurS subunits.

Its subcellular location is the cytoplasm. It carries out the reaction N(2)-formyl-N(1)-(5-phospho-beta-D-ribosyl)glycinamide + L-glutamine + ATP + H2O = 2-formamido-N(1)-(5-O-phospho-beta-D-ribosyl)acetamidine + L-glutamate + ADP + phosphate + H(+). It participates in purine metabolism; IMP biosynthesis via de novo pathway; 5-amino-1-(5-phospho-D-ribosyl)imidazole from N(2)-formyl-N(1)-(5-phospho-D-ribosyl)glycinamide: step 1/2. Functionally, part of the phosphoribosylformylglycinamidine synthase complex involved in the purines biosynthetic pathway. Catalyzes the ATP-dependent conversion of formylglycinamide ribonucleotide (FGAR) and glutamine to yield formylglycinamidine ribonucleotide (FGAM) and glutamate. The FGAM synthase complex is composed of three subunits. PurQ produces an ammonia molecule by converting glutamine to glutamate. PurL transfers the ammonia molecule to FGAR to form FGAM in an ATP-dependent manner. PurS interacts with PurQ and PurL and is thought to assist in the transfer of the ammonia molecule from PurQ to PurL. This chain is Phosphoribosylformylglycinamidine synthase subunit PurL, found in Pelagibacter ubique (strain HTCC1062).